Reading from the N-terminus, the 594-residue chain is E3 ubiquitin-protein ligase TRAF7 (594 aa).

A disordered region spans residues 1 to 33 (MPPINTPRRSDSAISVRSLHSESSMSLRSTFSL). Residues serine 12 and serine 15 each carry the phosphoserine modification. Positions 15–29 (SVRSLHSESSMSLRS) are enriched in low complexity. The RING-type zinc-finger motif lies at 55–89 (CQLCCSVFKDPVITTCGHTFCRRCALKSEKCPVDN). The TRAF-type zinc-finger motif lies at 146–216 (HESSCDYRPV…RFEGLKEFLQ (71 aa)). 7 WD repeats span residues 318-357 (GHQG…KCQK), 361-398 (GHDG…KVNT), 401-437 (AHDN…LKLK), 439-478 (ELTG…CIHV), 481-518 (TSGG…QVRT), 521-562 (GHVG…CTQT), and 565-593 (RHQG…KVWT).

Belongs to the WD repeat TRAF7 family. In terms of assembly, homodimer. Interacts with MAP3K3 and promotes the kinase activity of this enzyme. In terms of processing, phosphorylated by MAP3K3. Post-translationally, ubiquitinates itself upon phosphorylation. Ubiquitously expressed. Expression is relatively high in heart, liver, kidney, testis, prostate, thyroid, and salivary gland.

Its subcellular location is the cytoplasmic vesicle. It localises to the cytoplasm. The protein localises to the nucleus. It catalyses the reaction S-ubiquitinyl-[E2 ubiquitin-conjugating enzyme]-L-cysteine + [acceptor protein]-L-lysine = [E2 ubiquitin-conjugating enzyme]-L-cysteine + N(6)-ubiquitinyl-[acceptor protein]-L-lysine.. It functions in the pathway protein modification; protein ubiquitination. Functionally, E3 ubiquitin and SUMO-protein ligase that plays a role in different biological processes such as innate immunity, inflammation or apoptosis. Potentiates MAP3K3-mediated activation of the NF-kappa-B, JUN/AP1 and DDIT3 transcriptional regulators. Negatively regulates MYB transcriptional activity by sequestering it to the cytosol via SUMOylation. Plays a role in the phosphorylation of MAPK1 and/or MAPK3, probably via its interaction with MAP3K3. Negatively regulates RLR-mediated innate immunity by promoting 'Lys-48'-linked ubiquitination of TBK1 through its RING domain to inhibit the cellular antiviral response. Promotes 'Lys-29'-linked polyubiquitination of NEMO/IKBKG and RELA leading to targeting these two proteins to lysosomal degradative pathways, reducing the transcriptional activity of NF-kappa-B. This Mus musculus (Mouse) protein is E3 ubiquitin-protein ligase TRAF7.